Consider the following 269-residue polypeptide: Cell cycle regulator CcrZ (269 aa).

F39, H76, W77, M78, and G80 together coordinate ATP. The Brenner's motif [HXDhX3N] motif lies at 164-171 (HCDVNHNN). The active-site Proton acceptor is the D166. The APH motif lies at 180–203 (LYLIDWDGAMIADPAMDLGPLLYH).

The protein belongs to the aminoglycoside phosphotransferase family. Monomer in solution. Interacts with DnaA (via domains I (1-82) and III (111-326)). Interacts with DnaB. Interacts with FtsZ.

Its subcellular location is the cytoplasm. It carries out the reaction D-ribose + ATP = D-ribose 5-phosphate + ADP + H(+). The enzyme catalyses 2-deoxy-D-ribose + ATP = 2-deoxy-D-ribose 5-phosphate + ADP + H(+). Its activity is regulated as follows. Activated by D-ribose and 2-deoxy-D-ribose. Slightly activated by kanamycin and gentamicin. In terms of biological role, plays a role in cell cycle regulation and chromosome integrity. Activates DnaA-dependent chromosomal DNA replication initiation ensuring that the chromosome is replicated at the right time during the cell cycle. May regulate replication initiation through phosphorylation of a possible second messenger or metabolite, and by interacting with replication initiation proteins. Has ATPase activity with D-ribose and 2-deoxy-D-ribose in vitro, but not with choline. Involved in DNA damage response. The chain is Cell cycle regulator CcrZ from Bacillus subtilis (strain 168).